Consider the following 249-residue polypeptide: MLRWPLALTFLLLAVSGLECDVKEVCLASPGIPGTPGSHGLPGRDGRDGIKGDPGPPGPMGPPGGMAGPPGQDGMIGAPGLPGERGEKGEPGERGPPGLPAHLDEELQSALHEIRHQILQSMGVLSFQEFMLAVGEKVFSTNGQSVAFWMSLESCVPEQVGRIAAPRSPEENEAIASIVKKHNTYAYLGLVEGPTAGDFFYLDGTPVNYTNWYPGEPRGRGKEKCVEMYTDGQWNDRNCQQYRLAICEF.

An N-terminal signal peptide occupies residues 1-20; that stretch reads MLRWPLALTFLLLAVSGLEC. Positions 28 to 100 constitute a Collagen-like domain; the sequence is ASPGIPGTPG…PGERGPPGLP (73 aa). The tract at residues 29-102 is disordered; it reads SPGIPGTPGS…ERGPPGLPAH (74 aa). Residues P30, P33, P36, P42, P54, P57, P63, and P70 each carry the 4-hydroxyproline modification. Residues 42–51 are compositionally biased toward basic and acidic residues; sequence PGRDGRDGIK. Residues 84–93 are compositionally biased toward basic and acidic residues; sequence ERGEKGEPGE. Residues 133-249 form the C-type lectin domain; that stretch reads AVGEKVFSTN…QQYRLAICEF (117 aa). Disulfide bonds link C155/C247 and C225/C239. An N-linked (GlcNAc...) asparagine glycan is attached at N208. 4 residues coordinate Ca(2+): E216, R218, N235, and D236.

This sequence belongs to the SFTPA family. Oligomeric complex of 6 set of homotrimers.

Its subcellular location is the secreted. It localises to the extracellular space. The protein localises to the extracellular matrix. The protein resides in the surface film. In presence of calcium ions, it binds to surfactant phospholipids and contributes to lower the surface tension at the air-liquid interface in the alveoli of the mammalian lung and is essential for normal respiration. Enhances the expression of MYO18A/SP-R210 on alveolar macrophages. The chain is Pulmonary surfactant-associated protein A (SFTPA1) from Sus scrofa (Pig).